The primary structure comprises 393 residues: Lipid-A-disaccharide synthase (393 aa).

It belongs to the LpxB family.

The catalysed reaction is a lipid X + a UDP-2-N,3-O-bis[(3R)-3-hydroxyacyl]-alpha-D-glucosamine = a lipid A disaccharide + UDP + H(+). It functions in the pathway bacterial outer membrane biogenesis; LPS lipid A biosynthesis. Its function is as follows. Condensation of UDP-2,3-diacylglucosamine and 2,3-diacylglucosamine-1-phosphate to form lipid A disaccharide, a precursor of lipid A, a phosphorylated glycolipid that anchors the lipopolysaccharide to the outer membrane of the cell. This chain is Lipid-A-disaccharide synthase, found in Rhodopseudomonas palustris (strain HaA2).